A 107-amino-acid chain; its full sequence is 2Fe-2S ferredoxin CtmE (107 aa).

Residues 3–106 (VKVTYVDSAN…GLVIHTLEPE (104 aa)) enclose the 2Fe-2S ferredoxin-type domain. [2Fe-2S] cluster is bound by residues cysteine 41, cysteine 47, cysteine 50, and cysteine 87.

The protein belongs to the adrenodoxin/putidaredoxin family. [2Fe-2S] cluster serves as cofactor.

It participates in terpene metabolism; monoterpene degradation. Functionally, involved in the degradation of the cyclic monoterpene limonene. Probably part of an electron transfer system involved in the oxidation of limonene to perillyl alcohol. The chain is 2Fe-2S ferredoxin CtmE from Castellaniella defragrans (strain DSM 12143 / CCUG 39792 / 65Phen) (Alcaligenes defragrans).